Here is a 95-residue protein sequence, read N- to C-terminus: Protein TusB (95 aa).

It belongs to the DsrH/TusB family. Heterohexamer, formed by a dimer of trimers. The hexameric TusBCD complex contains 2 copies each of TusB, TusC and TusD. The TusBCD complex interacts with TusE.

The protein localises to the cytoplasm. Its function is as follows. Part of a sulfur-relay system required for 2-thiolation of 5-methylaminomethyl-2-thiouridine (mnm(5)s(2)U) at tRNA wobble positions. The chain is Protein TusB from Photorhabdus laumondii subsp. laumondii (strain DSM 15139 / CIP 105565 / TT01) (Photorhabdus luminescens subsp. laumondii).